Consider the following 79-residue polypeptide: Acyl carrier protein (79 aa).

The Carrier domain occupies 2-77; sequence ENIEQRVKKI…QAIDYVTAHL (76 aa). An O-(pantetheine 4'-phosphoryl)serine modification is found at Ser-37.

It belongs to the acyl carrier protein (ACP) family. 4'-phosphopantetheine is transferred from CoA to a specific serine of apo-ACP by AcpS. This modification is essential for activity because fatty acids are bound in thioester linkage to the sulfhydryl of the prosthetic group.

It is found in the cytoplasm. Its pathway is lipid metabolism; fatty acid biosynthesis. In terms of biological role, carrier of the growing fatty acid chain in fatty acid biosynthesis. The chain is Acyl carrier protein from Aromatoleum aromaticum (strain DSM 19018 / LMG 30748 / EbN1) (Azoarcus sp. (strain EbN1)).